A 156-amino-acid polypeptide reads, in one-letter code: Transcription inhibitor protein Gfh1 (156 aa).

Residues 1–74 (MAREVKLTKA…LEDILSRAVI (74 aa)) are a coiled coil. Glutamate 20 and glutamate 24 together coordinate Zn(2+).

This sequence belongs to the GreA/GreB family. Interacts with RNAP.

Its function is as follows. Inhibits all catalytic activities of RNA polymerase (RNAP) by partially occluding its substrate-binding site and preventing NTP binding. This is Transcription inhibitor protein Gfh1 (gfh1) from Thermus thermophilus (strain ATCC 27634 / DSM 579 / HB8).